The sequence spans 419 residues: Serine--tRNA ligase (419 aa).

226-228 lines the L-serine pocket; sequence TSE. ATP-binding positions include 257–259 and V273; that span reads RRE. Residue E280 participates in L-serine binding. 344–347 contacts ATP; it reads ELTS. T379 serves as a coordination point for L-serine.

This sequence belongs to the class-II aminoacyl-tRNA synthetase family. Type-1 seryl-tRNA synthetase subfamily. Homodimer. The tRNA molecule binds across the dimer.

The protein resides in the cytoplasm. It catalyses the reaction tRNA(Ser) + L-serine + ATP = L-seryl-tRNA(Ser) + AMP + diphosphate + H(+). The enzyme catalyses tRNA(Sec) + L-serine + ATP = L-seryl-tRNA(Sec) + AMP + diphosphate + H(+). It functions in the pathway aminoacyl-tRNA biosynthesis; selenocysteinyl-tRNA(Sec) biosynthesis; L-seryl-tRNA(Sec) from L-serine and tRNA(Sec): step 1/1. In terms of biological role, catalyzes the attachment of serine to tRNA(Ser). Is also able to aminoacylate tRNA(Sec) with serine, to form the misacylated tRNA L-seryl-tRNA(Sec), which will be further converted into selenocysteinyl-tRNA(Sec). This Corynebacterium diphtheriae (strain ATCC 700971 / NCTC 13129 / Biotype gravis) protein is Serine--tRNA ligase.